Reading from the N-terminus, the 47-residue chain is Putative glycosylation-dependent cell adhesion molecule 1 (47 aa).

An N-terminal signal peptide occupies residues 1 to 18 (MKFFMVLLPASLASTSLA).

It belongs to the PP3/GlyCAM-1 family. In terms of tissue distribution, expressed in cells harvested from milk of lactating women. Not found in other tissues.

The protein is Putative glycosylation-dependent cell adhesion molecule 1 (GLYCAM1) of Homo sapiens (Human).